A 163-amino-acid chain; its full sequence is Retinoic acid receptor responder protein 2 (163 aa).

A signal peptide spans 1–20; the sequence is MKYLLISLALWLGMVGIHGT. Disulfide bonds link Cys-79-Cys-89, Cys-100-Cys-119, and Cys-103-Cys-135. The propeptide occupies 158–163; that stretch reads RALKHK.

Post-translationally, secreted in an inactive precursor form, prochemerin, which is proteolytically processed by a variety of extracellular proteases to generate forms with differing levels of bioactivity. For example, the removal of six amino acids results in chemerin-157, which exhibits the highest activity, while removal of seven amino acids results in chemerin-156 which has slightly less activity. Some proteases are able to cleave at more than one site and chemerin forms may be sequentially processed by different enzymes to modulate activity levels. The coordinated expression and activity of chemerin-modifying enzymes is essential for regulating its bioactivation, inactivation and, consequently, biological function. Cathepsin G cleaves seven C-terminal amino acids from prochemerin (chemerin-156), elastase is able to cleave six (chemerin-157), eight (chemerin-155) or eleven (chemerin-152), plasmin cleaves five amino acids (chemerin-158), and tryptase cleaves five (chemerin-158) or eight (chemerin-155). Multiple cleavages might be required to fully activate chemerin, with an initial tryptase cleavage resulting in chemerin with low activity (chemerin-158), and a second cleavage by carboxypeptidase N or B producing highly active chemerin (chemerin-157).

It is found in the secreted. Adipocyte-secreted protein (adipokine) that regulates adipogenesis, metabolism and inflammation through activation of the chemokine-like receptor 1 (CMKLR1). Also acts as a ligand for CMKLR2. Can also bind to C-C chemokine receptor-like 2 (CCRL2), but with a lower affinity than it does to CMKLR1 or CMKLR2. Positively regulates adipocyte differentiation, modulates the expression of adipocyte genes involved in lipid and glucose metabolism and might play a role in angiogenesis, a process essential for the expansion of white adipose tissue. Also acts as a pro-inflammatory adipokine, causing an increase in secretion of pro-inflammatory and prodiabetic adipokines, which further impair adipose tissue metabolic function and have negative systemic effects including impaired insulin sensitivity, altered glucose and lipid metabolism, and a decrease in vascular function in other tissues. Can have both pro- and anti-inflammatory properties depending on the modality of enzymatic cleavage by different classes of proteases. Acts as a chemotactic factor for leukocyte populations expressing CMKLR1, particularly immature plasmacytoid dendritic cells, but also immature myeloid DCs, macrophages and natural killer cells. Exerts an anti-inflammatory role by preventing TNF/TNFA-induced VCAM1 expression and monocytes adhesion in vascular endothelial cells. The effect is mediated via inhibiting activation of NF-kappa-B and CRK/p38 through stimulation of AKT1/NOS3 signaling and nitric oxide production. Its dual role in inflammation and metabolism might provide a link Exhibits an antimicrobial function in the skin. This is Retinoic acid receptor responder protein 2 (RARRES2) from Cricetulus griseus (Chinese hamster).